The following is a 299-amino-acid chain: 4-diphosphocytidyl-2-C-methyl-D-erythritol kinase (299 aa).

Lys16 is a catalytic residue. 101–111 is a binding site for ATP; it reads PVAAGIGGGSA. Asp143 is a catalytic residue.

Belongs to the GHMP kinase family. IspE subfamily.

It catalyses the reaction 4-CDP-2-C-methyl-D-erythritol + ATP = 4-CDP-2-C-methyl-D-erythritol 2-phosphate + ADP + H(+). The protein operates within isoprenoid biosynthesis; isopentenyl diphosphate biosynthesis via DXP pathway; isopentenyl diphosphate from 1-deoxy-D-xylulose 5-phosphate: step 3/6. Catalyzes the phosphorylation of the position 2 hydroxy group of 4-diphosphocytidyl-2C-methyl-D-erythritol. The sequence is that of 4-diphosphocytidyl-2-C-methyl-D-erythritol kinase from Rhodopseudomonas palustris (strain ATCC BAA-98 / CGA009).